Consider the following 515-residue polypeptide: Maturase K (515 aa).

This sequence belongs to the intron maturase 2 family. MatK subfamily.

Its subcellular location is the plastid. The protein localises to the chloroplast. Its function is as follows. Usually encoded in the trnK tRNA gene intron. Probably assists in splicing its own and other chloroplast group II introns. The protein is Maturase K of Alpinia calcarata (Snap ginger).